The following is a 429-amino-acid chain: Ribosomal RNA small subunit methyltransferase B (429 aa).

S-adenosyl-L-methionine is bound by residues 254–260 (CAGPGGK), Asp-277, Asp-303, and Asp-322. Cys-375 acts as the Nucleophile in catalysis.

It belongs to the class I-like SAM-binding methyltransferase superfamily. RsmB/NOP family.

Its subcellular location is the cytoplasm. The catalysed reaction is cytidine(967) in 16S rRNA + S-adenosyl-L-methionine = 5-methylcytidine(967) in 16S rRNA + S-adenosyl-L-homocysteine + H(+). Specifically methylates the cytosine at position 967 (m5C967) of 16S rRNA. The protein is Ribosomal RNA small subunit methyltransferase B of Escherichia coli O6:K15:H31 (strain 536 / UPEC).